A 590-amino-acid chain; its full sequence is Laccase-19 (590 aa).

The N-terminal stretch at 1 to 28 is a signal peptide; that stretch reads MEKLSMVTSLLCAITVAVLAVAVVSGEA. 2 Plastocyanin-like domains span residues 36–152 and 161–315; these read VVHE…PRDG and KDVP…YAGT. N-linked (GlcNAc...) asparagine glycans are attached at residues N41 and N47. H86 and H88 together coordinate Cu cation. An N-linked (GlcNAc...) asparagine glycan is attached at N120. Cu cation contacts are provided by H131 and H133. N-linked (GlcNAc...) asparagine glycans are attached at residues N205, N344, N378, N397, N434, and N465. The Plastocyanin-like 3 domain maps to 424–566; the sequence is DFPIRPPRPF…ATAFIVEDGP (143 aa). 8 residues coordinate Cu cation: N483, H486, H488, H545, C546, H547, H551, and M556. Positions 565 to 590 are disordered; the sequence is GPTPETSLPPPPPEFKRCGNNGLSQP.

The protein belongs to the multicopper oxidase family. Cu cation serves as cofactor.

The protein resides in the secreted. The protein localises to the extracellular space. It is found in the apoplast. It carries out the reaction 4 hydroquinone + O2 = 4 benzosemiquinone + 2 H2O. In terms of biological role, lignin degradation and detoxification of lignin-derived products. This is Laccase-19 (LAC19) from Oryza sativa subsp. japonica (Rice).